Consider the following 351-residue polypeptide: Protein RecA (351 aa).

68–75 (GPESSGKT) is a binding site for ATP.

The protein belongs to the RecA family.

It is found in the cytoplasm. Functionally, can catalyze the hydrolysis of ATP in the presence of single-stranded DNA, the ATP-dependent uptake of single-stranded DNA by duplex DNA, and the ATP-dependent hybridization of homologous single-stranded DNAs. It interacts with LexA causing its activation and leading to its autocatalytic cleavage. The chain is Protein RecA from Chloroflexus aurantiacus (strain ATCC 29364 / DSM 637 / Y-400-fl).